Here is a 152-residue protein sequence, read N- to C-terminus: Deoxyuridine 5'-triphosphate nucleotidohydrolase (152 aa).

Residues 71–73, Asn-84, 88–90, and Met-98 contribute to the substrate site; these read RSG and LID.

This sequence belongs to the dUTPase family. The cofactor is Mg(2+).

The enzyme catalyses dUTP + H2O = dUMP + diphosphate + H(+). The protein operates within pyrimidine metabolism; dUMP biosynthesis; dUMP from dCTP (dUTP route): step 2/2. In terms of biological role, this enzyme is involved in nucleotide metabolism: it produces dUMP, the immediate precursor of thymidine nucleotides and it decreases the intracellular concentration of dUTP so that uracil cannot be incorporated into DNA. In Shigella flexneri, this protein is Deoxyuridine 5'-triphosphate nucleotidohydrolase.